A 205-amino-acid chain; its full sequence is GTP cyclohydrolase-2 (205 aa).

49 to 53 contacts GTP; sequence RIHSE. Residues Cys54, Cys65, and Cys67 each contribute to the Zn(2+) site. Residues Gln70, 92–94, and Thr114 contribute to the GTP site; that span reads EGR. The active-site Proton acceptor is the Asp126. Residue Arg128 is the Nucleophile of the active site. GTP is bound by residues Thr149 and Lys154.

It belongs to the GTP cyclohydrolase II family. It depends on Zn(2+) as a cofactor.

The enzyme catalyses GTP + 4 H2O = 2,5-diamino-6-hydroxy-4-(5-phosphoribosylamino)-pyrimidine + formate + 2 phosphate + 3 H(+). It participates in cofactor biosynthesis; riboflavin biosynthesis; 5-amino-6-(D-ribitylamino)uracil from GTP: step 1/4. Functionally, catalyzes the conversion of GTP to 2,5-diamino-6-ribosylamino-4(3H)-pyrimidinone 5'-phosphate (DARP), formate and pyrophosphate. This chain is GTP cyclohydrolase-2, found in Shewanella loihica (strain ATCC BAA-1088 / PV-4).